A 546-amino-acid polypeptide reads, in one-letter code: Glucose-6-phosphate isomerase (546 aa).

The Proton donor role is filled by Glu-357. Active-site residues include His-389 and Lys-509.

It belongs to the GPI family.

It localises to the cytoplasm. It carries out the reaction alpha-D-glucose 6-phosphate = beta-D-fructose 6-phosphate. It participates in carbohydrate biosynthesis; gluconeogenesis. The protein operates within carbohydrate degradation; glycolysis; D-glyceraldehyde 3-phosphate and glycerone phosphate from D-glucose: step 2/4. Functionally, catalyzes the reversible isomerization of glucose-6-phosphate to fructose-6-phosphate. The sequence is that of Glucose-6-phosphate isomerase from Anaeromyxobacter sp. (strain K).